A 293-amino-acid chain; its full sequence is 4-diphosphocytidyl-2-C-methyl-D-erythritol kinase (293 aa).

The active site involves Lys16. 99–109 (PMGAGLGGGSS) contacts ATP. Asp141 is a catalytic residue.

This sequence belongs to the GHMP kinase family. IspE subfamily.

The enzyme catalyses 4-CDP-2-C-methyl-D-erythritol + ATP = 4-CDP-2-C-methyl-D-erythritol 2-phosphate + ADP + H(+). Its pathway is isoprenoid biosynthesis; isopentenyl diphosphate biosynthesis via DXP pathway; isopentenyl diphosphate from 1-deoxy-D-xylulose 5-phosphate: step 3/6. Functionally, catalyzes the phosphorylation of the position 2 hydroxy group of 4-diphosphocytidyl-2C-methyl-D-erythritol. The polypeptide is 4-diphosphocytidyl-2-C-methyl-D-erythritol kinase (Burkholderia pseudomallei (strain 668)).